A 147-amino-acid chain; its full sequence is uncharacterized protein (147 aa).

Positions 1–137 (MRDNTIGSLI…LYELMTKVHK (137 aa)) constitute an HTH marR-type domain. Residues 53 to 76 (QMELAEKVTVTQGGISRMLTRLEK) constitute a DNA-binding region (H-T-H motif).

This is an uncharacterized protein from Bacillus anthracis.